Consider the following 231-residue polypeptide: Succinate dehydrogenase subunit 5, mitochondrial (231 aa).

The transit peptide at 1–63 directs the protein to the mitochondrion; sequence MAAALRSSCA…AFSWNLRRLF (63 aa).

Component of complex II composed of eight subunits in plants: four classical SDH subunits SDH1, SDH2, SDH3 and SDH4 (a flavoprotein (FP), an iron-sulfur protein (IP), and a cytochrome b composed of a large and a small subunit.), as well as four subunits unknown in mitochondria from bacteria and heterotrophic eukaryotes.

It is found in the mitochondrion inner membrane. Its pathway is carbohydrate metabolism; tricarboxylic acid cycle. This chain is Succinate dehydrogenase subunit 5, mitochondrial, found in Oryza sativa subsp. japonica (Rice).